Consider the following 318-residue polypeptide: Ubiquitin-like domain-containing CTD phosphatase 1 (318 aa).

In terms of domain architecture, Ubiquitin-like spans 3–81 (LPIIVKWGGQ…IMMMGTREES (79 aa)). At Lys117 the chain carries N6-acetyllysine. The FCP1 homology domain occupies 133 to 294 (PREGKKLLVL…VKLTQYLKEI (162 aa)). Mg(2+) is bound by residues Asp143, Asp145, and Asp253.

Mg(2+) serves as cofactor.

It localises to the nucleus. It carries out the reaction O-phospho-L-seryl-[protein] + H2O = L-seryl-[protein] + phosphate. It catalyses the reaction O-phospho-L-threonyl-[protein] + H2O = L-threonyl-[protein] + phosphate. In terms of biological role, dephosphorylates 26S nuclear proteasomes, thereby decreasing their proteolytic activity. Recruited to the 19S regulatory particle of the 26S proteasome through its interaction with 19S component PSMD2/RPN1. Once recruited, dephosphorylates 19S component PSMC2/RPT1 which impairs PSMC2 ATPase activity and disrupts 26S proteasome assembly. Has also been reported to stimulate the proteolytic activity of the 26S proteasome. The chain is Ubiquitin-like domain-containing CTD phosphatase 1 (Ublcp1) from Rattus norvegicus (Rat).